Reading from the N-terminus, the 325-residue chain is Aquaporin-8 (325 aa).

Residues 1–10 are Cytoplasmic-facing; the sequence is MALRSPARDY. A helical membrane pass occupies residues 11-31; that stretch reads LVSMIGELVGTFLFLFFAFAA. Residues 32–52 are Extracellular-facing; it reads AQTANQPNGTKPLTPNATDTS. 2 N-linked (GlcNAc...) asparagine glycosylation sites follow: Asn-39 and Asn-47. Residues 53–73 traverse the membrane as a helical segment; the sequence is KLLYIALAFGASLAANVWVFF. Residues 74–100 lie on the Cytoplasmic side of the membrane; sequence RVSGGQFNPAVTLALVLIRAVSPTKAL. Residues 81–83 carry the NPA 1 motif; it reads NPA. The helical transmembrane segment at 101–121 threads the bilayer; sequence ILIPAQLVGGSLAAAAVKGII. At 122-140 the chain is on the extracellular side; that stretch reads PGDDILFAVSLGPGVANVQ. A helical transmembrane segment spans residues 141–161; the sequence is GLFIELLLTFMLVFTILMLVA. Over 162 to 167 the chain is Cytoplasmic; the sequence is EKTKST. A helical transmembrane segment spans residues 168–188; the sequence is FVAPIGIGFSLFIGHLVGIFW. The Extracellular portion of the chain corresponds to 189–212; that stretch reads TGAGINPARAFSPALIQASFPSYH. Residues 194–196 carry the NPA 2 motif; it reads NPA. Residues 213–233 traverse the membrane as a helical segment; it reads WIYWLGPALGSFLAAGLYLGL. Residues 234 to 325 are Cytoplasmic-facing; the sequence is KEMKYELVGG…GSPDSTDLPT (92 aa). Disordered regions lie at residues 279-298 and 305-325; these read LGQF…LERG and EDDP…DLPT. Residues 286-298 are compositionally biased toward basic and acidic residues; sequence TEGHRSPVDLERG.

This sequence belongs to the MIP/aquaporin (TC 1.A.8) family.

Its subcellular location is the cell membrane. It catalyses the reaction H2O2(out) = H2O2(in). The catalysed reaction is H2O(in) = H2O(out). Plasma membrane water channel that regulates the reactive oxygen species (ROS)-signaling pathway through its capacity to act as a membrane channel for hydrogen peroxide uptake. Required for the formation of infection structures and infection, especially on host leaves where it is essential for the penetration into the host. Regulates the expression of proteins related to redox-regulation and intracellular signal transduction and plays a role in the distribution of mitochondria in the hyphae. The polypeptide is Aquaporin-8 (Botryotinia fuckeliana (strain B05.10) (Noble rot fungus)).